Consider the following 92-residue polypeptide: Small ribosomal subunit protein uS19 (92 aa).

It belongs to the universal ribosomal protein uS19 family.

Protein S19 forms a complex with S13 that binds strongly to the 16S ribosomal RNA. The chain is Small ribosomal subunit protein uS19 from Malacoplasma penetrans (strain HF-2) (Mycoplasma penetrans).